Reading from the N-terminus, the 37-residue chain is Large ribosomal subunit protein bL36c (37 aa).

This sequence belongs to the bacterial ribosomal protein bL36 family.

It is found in the plastid. Its subcellular location is the chloroplast. The protein is Large ribosomal subunit protein bL36c of Stigeoclonium helveticum (Green alga).